The following is a 378-amino-acid chain: MEVKARAPGKIILAGEHAVVHGSTAVAAAIDLYTYVTLRFPLPSAENNDRLTLQLKDISLEFSWSLARIKEAIPYDSSTLCRSTPASCSEETLKSIAVLVEEQNLPKEKMWLSSGISTFLWLYTRIIGFNPATVVINSELPYGSGLGSSAALCVALTAALLASSISEKTRGNGWSSLDETNLELLNKWAFEGEKIIHGKPSGIDNTVSAYGNMIKFCSGEITRLQSNMPLRMLITNTRVGRNTKALVSGVSQRAVRHPDAMKSVFNAVDSISKELAAIIQSKDETSVTEKEERIKELMEMNQGLLLSMGVSHSSIEAVILTTVKHKLVSKLTGAGGGGCVLTLLPTGTVVDKVVEELESSGFQCFTALIGGNGAQICY.

ATP-binding positions include Lys-10, Ser-138, and 143-149 (GSGLGSS). The Mg(2+) site is built by Ser-149 and Glu-193. Asp-204 functions as the Proton acceptor in the catalytic mechanism.

It belongs to the GHMP kinase family. Mevalonate kinase subfamily. The cofactor is Mg(2+).

The protein resides in the cytoplasm. The enzyme catalyses (R)-mevalonate + ATP = (R)-5-phosphomevalonate + ADP + H(+). Its pathway is isoprenoid biosynthesis; isopentenyl diphosphate biosynthesis via mevalonate pathway; isopentenyl diphosphate from (R)-mevalonate: step 1/3. Its activity is regulated as follows. Its activity is inhibited in vitro by geranyl pyrophosphate (GPP) and farnesyl pyrophosphate (FPP) that bind competitively at the ATP-binding site on the enzyme. Functionally, catalyzes the phosphorylation of mevalonate to mevalonate 5-phosphate, a key step in isoprenoid and cholesterol biosynthesis. The sequence is that of Mevalonate kinase from Arabidopsis thaliana (Mouse-ear cress).